The following is a 25-amino-acid chain: Ranatuerin-1C (25 aa).

Cysteine 19 and cysteine 25 form a disulfide bridge.

Expressed by the skin glands.

Its subcellular location is the secreted. Antibacterial activity against Gram-positive bacterium S.aureus (MIC=55 uM) and Gram-negative bacterium E.coli (MIC=1.5 uM). Has activity against C.albicans (MIC=58 uM). The chain is Ranatuerin-1C from Lithobates clamitans (Green frog).